The following is a 161-amino-acid chain: 2-C-methyl-D-erythritol 2,4-cyclodiphosphate synthase (161 aa).

Positions 9 and 11 each coordinate a divalent metal cation. 4-CDP-2-C-methyl-D-erythritol 2-phosphate contacts are provided by residues 9-11 (DFH) and 37-38 (HS). Residue histidine 45 participates in a divalent metal cation binding. 4-CDP-2-C-methyl-D-erythritol 2-phosphate is bound by residues 59 to 61 (DIG), 64 to 68 (FPDTD), 135 to 138 (TTTE), and arginine 145.

Belongs to the IspF family. As to quaternary structure, homotrimer. It depends on a divalent metal cation as a cofactor.

The enzyme catalyses 4-CDP-2-C-methyl-D-erythritol 2-phosphate = 2-C-methyl-D-erythritol 2,4-cyclic diphosphate + CMP. Its pathway is isoprenoid biosynthesis; isopentenyl diphosphate biosynthesis via DXP pathway; isopentenyl diphosphate from 1-deoxy-D-xylulose 5-phosphate: step 4/6. Functionally, involved in the biosynthesis of isopentenyl diphosphate (IPP) and dimethylallyl diphosphate (DMAPP), two major building blocks of isoprenoid compounds. Catalyzes the conversion of 4-diphosphocytidyl-2-C-methyl-D-erythritol 2-phosphate (CDP-ME2P) to 2-C-methyl-D-erythritol 2,4-cyclodiphosphate (ME-CPP) with a corresponding release of cytidine 5-monophosphate (CMP). This chain is 2-C-methyl-D-erythritol 2,4-cyclodiphosphate synthase, found in Leptospira interrogans serogroup Icterohaemorrhagiae serovar copenhageni (strain Fiocruz L1-130).